A 484-amino-acid chain; its full sequence is Cathepsin F (484 aa).

An N-terminal signal peptide occupies residues 1–19; sequence MAPWLQLLSLLGLLPGAVA. Residues 20–270 constitute a propeptide, activation peptide; that stretch reads APAQPRAASF…MKQAKSVGDL (251 aa). N160 and N195 each carry an N-linked (GlcNAc...) asparagine glycan. 2 disulfides stabilise this stretch: C292-C333 and C326-C366. The active site involves C295. Residues N367 and N378 are each glycosylated (N-linked (GlcNAc...) asparagine). A disulfide bond links C424 and C472. H431 is an active-site residue. N-linked (GlcNAc...) asparagine glycosylation is present at N440. Residue N451 is part of the active site.

The protein belongs to the peptidase C1 family. In terms of tissue distribution, high expression levels in heart, skeletal muscle, brain, testis and ovary; moderate levels in prostate, placenta, liver and colon; and no detectable expression in peripheral leukocytes and thymus.

The protein resides in the lysosome. The catalysed reaction is The recombinant enzyme cleaves synthetic substrates with Phe and Leu (better than Val) in P2, with high specificity constant (kcat/Km) comparable to that of cathepsin L.. Its function is as follows. Thiol protease which is believed to participate in intracellular degradation and turnover of proteins. Has also been implicated in tumor invasion and metastasis. The protein is Cathepsin F (CTSF) of Homo sapiens (Human).